Here is an 82-residue protein sequence, read N- to C-terminus: Small ribosomal subunit protein eS21y (82 aa).

Residue Met-1 is modified to N-acetylmethionine.

This sequence belongs to the eukaryotic ribosomal protein eS21 family.

This Arabidopsis thaliana (Mouse-ear cress) protein is Small ribosomal subunit protein eS21y (RPS21C).